Reading from the N-terminus, the 362-residue chain is Patr class I histocompatibility antigen, B-2 alpha chain (362 aa).

Residues 1-24 form the signal peptide; the sequence is MQVTAPRTVLLLLSAALALTETWA. Residues 25-114 form an alpha-1 region; sequence GSHSMKYFYT…LRGYYNQSEA (90 aa). The Extracellular portion of the chain corresponds to 25 to 308; the sequence is GSHSMKYFYT…EPSSQSTIPI (284 aa). Asn-110 carries an N-linked (GlcNAc...) asparagine glycan. The tract at residues 115–206 is alpha-2; that stretch reads GSHIIQRMYG…ENGKETLQRA (92 aa). 2 disulfides stabilise this stretch: Cys-125–Cys-188 and Cys-227–Cys-283. Residues 207-298 form an alpha-3 region; it reads DPPKTHVTHH…GLPKPLTLRW (92 aa). Positions 209–295 constitute an Ig-like C1-type domain; sequence PKTHVTHHPI…QHEGLPKPLT (87 aa). Residues 299–308 are connecting peptide; that stretch reads EPSSQSTIPI. Residues 309–332 form a helical membrane-spanning segment; that stretch reads VGIVAGLAVLAVVVIGAVVAAVMC. Topologically, residues 333–362 are cytoplasmic; sequence RRKSSGGKGGSYSQAASSDSAQGSDVSLTA. The segment at 336-362 is disordered; sequence SSGGKGGSYSQAASSDSAQGSDVSLTA. The segment covering 343–362 has biased composition (low complexity); that stretch reads SYSQAASSDSAQGSDVSLTA.

This sequence belongs to the MHC class I family. In terms of assembly, heterodimer of an alpha chain and a beta chain (beta-2-microglobulin).

It is found in the membrane. Its function is as follows. Involved in the presentation of foreign antigens to the immune system. The polypeptide is Patr class I histocompatibility antigen, B-2 alpha chain (Pan troglodytes (Chimpanzee)).